The sequence spans 353 residues: Membrane lipoprotein TmpC (353 aa).

The N-terminal stretch at 1 to 20 (MREKWVRAFAGVFCAMLLIG) is a signal peptide. Residue cysteine 21 is the site of N-palmitoyl cysteine attachment. Cysteine 21 is lipidated: S-diacylglycerol cysteine. A guanosine-binding site is contributed by aspartate 47. Aspartate 47 provides a ligand contact to inosine. Residues 47 to 48 (DS) and phenylalanine 56 each bind adenosine. Asparagine 57, aspartate 128, phenylalanine 206, glycine 232, aspartate 258, and lysine 280 together coordinate guanosine. Inosine is bound by residues asparagine 57 and aspartate 128. Positions 128, 206, 232, 258, and 280 each coordinate adenosine. Residues glycine 232, aspartate 258, and lysine 280 each coordinate inosine.

Belongs to the BMP lipoprotein family. In terms of assembly, monomer.

The protein resides in the cell membrane. Functionally, binds purine nucleosides and may play a role in purine nucleoside uptake. May be part of an ABC-type nucleoside uptake system. Has highest affinity for guanosine, followed by inosine and adenosine. Has very low affinity for cytidine and does not bind thymidine. This is Membrane lipoprotein TmpC (tmpC) from Treponema pallidum (strain Nichols).